The following is a 636-amino-acid chain: Outer spore wall assembly protein SHE10 (636 aa).

An N-terminal signal peptide occupies residues 1 to 23; it reads MRLVSKLLKALLVLLLAFGSVRY. Coiled coils occupy residues 433–460 and 551–584; these read RAHLRKLADEVNDHVEVLRQENVELFEE and KANLEFQAREALERQQREKEKAESASMKASTEFE. The segment at 565–607 is disordered; sequence QQREKEKAESASMKASTEFELSSSSFSSSSPSTASSCTASSTS. A compositionally biased stretch (low complexity) spans 579–607; sequence ASTEFELSSSSFSSSSPSTASSCTASSTS.

The protein belongs to the SHE10 family. As to quaternary structure, component of the mitochondria-localized RNase mitochondrial RNA-processing (RNase MRP) composed of one single RNA encoded by the NME1 gene and at least 31 proteins. Absent in the nucleus-localized RNase MRP (NuMRP).

The protein localises to the mitochondrion. Its function is as follows. Involved in spore wall assembly. May be a component of the mitochondrial RNase MRP (MtMRP), a ribonucleoprotein endoribonuclease involved in the cleaving RNA transcripts to generate primers for DNA replication in mitochondria. This Kluyveromyces lactis (strain ATCC 8585 / CBS 2359 / DSM 70799 / NBRC 1267 / NRRL Y-1140 / WM37) (Yeast) protein is Outer spore wall assembly protein SHE10.